Here is a 604-residue protein sequence, read N- to C-terminus: UvrABC system protein C (604 aa).

The GIY-YIG domain occupies 14–91 (ESPGVYRMLD…IKEQRPPYNI (78 aa)). The UVR domain maps to 202–237 (EQVTAQLTRDMETASQALDFEEAARLRDQIQQLRRL). Residues 538–557 (GHRQQRDKQRRTSTLQDIPG) form a disordered region.

The protein belongs to the UvrC family. As to quaternary structure, interacts with UvrB in an incision complex.

The protein localises to the cytoplasm. Functionally, the UvrABC repair system catalyzes the recognition and processing of DNA lesions. UvrC both incises the 5' and 3' sides of the lesion. The N-terminal half is responsible for the 3' incision and the C-terminal half is responsible for the 5' incision. This chain is UvrABC system protein C, found in Chromohalobacter salexigens (strain ATCC BAA-138 / DSM 3043 / CIP 106854 / NCIMB 13768 / 1H11).